A 196-amino-acid polypeptide reads, in one-letter code: 3-isopropylmalate dehydratase small subunit (196 aa).

Belongs to the LeuD family. LeuD type 1 subfamily. In terms of assembly, heterodimer of LeuC and LeuD.

The enzyme catalyses (2R,3S)-3-isopropylmalate = (2S)-2-isopropylmalate. It participates in amino-acid biosynthesis; L-leucine biosynthesis; L-leucine from 3-methyl-2-oxobutanoate: step 2/4. Catalyzes the isomerization between 2-isopropylmalate and 3-isopropylmalate, via the formation of 2-isopropylmaleate. This chain is 3-isopropylmalate dehydratase small subunit, found in Rhodopirellula baltica (strain DSM 10527 / NCIMB 13988 / SH1).